Here is a 333-residue protein sequence, read N- to C-terminus: Glyceraldehyde-3-phosphate dehydrogenase (333 aa).

NAD(+) is bound by residues 12–13 (RI), Asp-36, Arg-80, and Ser-120. D-glyceraldehyde 3-phosphate-binding positions include 150 to 152 (SCT), Thr-181, Arg-196, 209 to 210 (TG), and Arg-232. Cys-151 functions as the Nucleophile in the catalytic mechanism. Asn-314 is a binding site for NAD(+).

This sequence belongs to the glyceraldehyde-3-phosphate dehydrogenase family. As to quaternary structure, homotetramer.

Its subcellular location is the cytoplasm. The enzyme catalyses D-glyceraldehyde 3-phosphate + phosphate + NAD(+) = (2R)-3-phospho-glyceroyl phosphate + NADH + H(+). The protein operates within carbohydrate degradation; glycolysis; pyruvate from D-glyceraldehyde 3-phosphate: step 1/5. Its function is as follows. Catalyzes the oxidative phosphorylation of glyceraldehyde 3-phosphate (G3P) to 1,3-bisphosphoglycerate (BPG) using the cofactor NAD. The first reaction step involves the formation of a hemiacetal intermediate between G3P and a cysteine residue, and this hemiacetal intermediate is then oxidized to a thioester, with concomitant reduction of NAD to NADH. The reduced NADH is then exchanged with the second NAD, and the thioester is attacked by a nucleophilic inorganic phosphate to produce BPG. The chain is Glyceraldehyde-3-phosphate dehydrogenase (gapB) from Cereibacter sphaeroides (Rhodobacter sphaeroides).